The following is a 143-amino-acid chain: MQNQNPVELIEYELTTFIRRAVYLDQSEKRTGNLERSSYLLLRQLDEFGPARVKELAESFKLDISTLSRQAAALEAKELIYRFSDPSDGRVSLFTITKLGKQLLKADQQKRLERYEQMLKEWSTQEKEMFGELLQRMNKAFID.

Residues 11-139 (EYELTTFIRR…FGELLQRMNK (129 aa)) form the HTH marR-type domain. Residues 53–76 (VKELAESFKLDISTLSRQAAALEA) constitute a DNA-binding region (H-T-H motif).

This is an uncharacterized protein from Bacillus subtilis (strain 168).